The following is a 521-amino-acid chain: Bifunctional purine biosynthesis protein PurH (521 aa).

Positions 1-145 (MIKQALISVS…KNHRDVTVVV (145 aa)) constitute an MGS-like domain.

The protein belongs to the PurH family.

It carries out the reaction (6R)-10-formyltetrahydrofolate + 5-amino-1-(5-phospho-beta-D-ribosyl)imidazole-4-carboxamide = 5-formamido-1-(5-phospho-D-ribosyl)imidazole-4-carboxamide + (6S)-5,6,7,8-tetrahydrofolate. The catalysed reaction is IMP + H2O = 5-formamido-1-(5-phospho-D-ribosyl)imidazole-4-carboxamide. It functions in the pathway purine metabolism; IMP biosynthesis via de novo pathway; 5-formamido-1-(5-phospho-D-ribosyl)imidazole-4-carboxamide from 5-amino-1-(5-phospho-D-ribosyl)imidazole-4-carboxamide (10-formyl THF route): step 1/1. The protein operates within purine metabolism; IMP biosynthesis via de novo pathway; IMP from 5-formamido-1-(5-phospho-D-ribosyl)imidazole-4-carboxamide: step 1/1. The sequence is that of Bifunctional purine biosynthesis protein PurH from Burkholderia pseudomallei (strain 1106a).